We begin with the raw amino-acid sequence, 814 residues long: MSSSDSDSVSLSIRRRQRRGSSKRISMKESDEESDSSENHPLSESLNKKSKSESDEDDIPIRKRRASSKKNMSNSSSKKRAKVMGNGGLKNGKKTAVVKEEEDFNEIAKPSPKHKRVSKANGSKNGAKSAVKKEESDTDDSVPLRAVSTVSLTPYKSELPSGASTTQNRSPNDEEDEDEDYKWWTSENIDDTQKWTTLEHNGVIFAPPYEPLPKNVKLIYDGNPVNLPPEAEEVAGFYAAMLETDHAKNPVFQDNFFRDFLKVCDECNFNHNIKEFSKCDFTQMFHHFEQKREEKKSMPKEQKKAIKQKKDEEEEKYKWCILDGRKEKVGNFRIEPPGLFRGRGSHPKTGSLKRRVYPEQITINIGEGVPVPEPLPGHQWAEVKHDNTVTWLATWHENINNNVKYVFLAAGSSLKGQSDLKKYEKSRKLKDYIDDIRKGYRKDLKSELTVERQRGTAMYLIDVFALRAGNEKGEDEADTVGCCSLRYEHVTLKPPRTVVFDFLGKDSIRYYNEVEVDPQVFKNLKIFKRPPKKEGDLIFDRLSTNSLNKYLTSLMDGLSAKVFRTYNASYTMAEELKKMPKNLTLADKILFYNRANRTVAILCNHQRSVTKNHDVQMERFAERIKALQYQRMRLRKMMLNLEPKLAKSKPELLAKEEGITDSWIVKHHETLYELEKEKIKKKFDRENEKLAAEDPKSVLPESELEVRLKAADELKKALDAELKSKKVDPGRSSMEQLEKRLNKLNERINVMRTQMIDKDENKTTALGTSKINYIDPRLTYSFSKREDVPIEKLFSKTIRDKFNWAADTPPDWKW.

The segment covering 1–12 has biased composition (low complexity); the sequence is MSSSDSDSVSLS. The segment at 1-180 is disordered; the sequence is MSSSDSDSVS…PNDEEDEDED (180 aa). Positions 13-22 are enriched in basic residues; it reads IRRRQRRGSS. 3 positions are modified to phosphoserine: S52, S54, and S136. T138 carries the post-translational modification Phosphothreonine. Interaction with DNA stretches follow at residues 404–405, 467–472, and 559–561; these read KY, RAGNEK, and SAK. The Topo IB-type catalytic domain maps to 411 to 814; that stretch reads GSSLKGQSDL…AADTPPDWKW (404 aa). The O-(3'-phospho-DNA)-tyrosine intermediate role is filled by Y773.

This sequence belongs to the type IB topoisomerase family. In terms of assembly, monomer.

It carries out the reaction ATP-independent breakage of single-stranded DNA, followed by passage and rejoining.. In terms of biological role, releases the supercoiling and torsional tension of DNA introduced during the DNA replication and transcription by transiently cleaving and rejoining one strand of the DNA duplex. Introduces a single-strand break via transesterification at a target site in duplex DNA. The scissile phosphodiester is attacked by the catalytic tyrosine of the enzyme, resulting in the formation of a DNA-(3'-phosphotyrosyl)-enzyme intermediate and the expulsion of a 5'-OH DNA strand. TThe free DNA strand then rotates around the intact phosphodiester bond on the opposing strand, thus removing DNA supercoils. Finally, in the religation step, the DNA 5'-OH attacks the covalent intermediate to expel the active-site tyrosine and restore the DNA phosphodiester backbone. The chain is DNA topoisomerase 1 (top1) from Schizosaccharomyces pombe (strain 972 / ATCC 24843) (Fission yeast).